Here is a 404-residue protein sequence, read N- to C-terminus: Tryptophan synthase beta chain (404 aa).

Residue K90 is modified to N6-(pyridoxal phosphate)lysine.

The protein belongs to the TrpB family. As to quaternary structure, tetramer of two alpha and two beta chains. The cofactor is pyridoxal 5'-phosphate.

The enzyme catalyses (1S,2R)-1-C-(indol-3-yl)glycerol 3-phosphate + L-serine = D-glyceraldehyde 3-phosphate + L-tryptophan + H2O. It participates in amino-acid biosynthesis; L-tryptophan biosynthesis; L-tryptophan from chorismate: step 5/5. In terms of biological role, the beta subunit is responsible for the synthesis of L-tryptophan from indole and L-serine. This chain is Tryptophan synthase beta chain (trpB), found in Geobacillus stearothermophilus (Bacillus stearothermophilus).